The following is a 304-amino-acid chain: Probable aspartoacylase (304 aa).

Zn(2+)-binding residues include H13 and E16. Residues R55 and 62–63 (NR) each bind substrate. Residue H104 participates in Zn(2+) binding. Substrate is bound by residues E162 and Y272.

It belongs to the AspA/AstE family. Aspartoacylase subfamily. Zn(2+) is required as a cofactor.

The catalysed reaction is an N-acyl-L-aspartate + H2O = a carboxylate + L-aspartate. The sequence is that of Probable aspartoacylase from Synechococcus sp. (strain CC9605).